A 174-amino-acid polypeptide reads, in one-letter code: ATP-dependent protease subunit HslV (174 aa).

Residue Thr-2 is part of the active site. The Na(+) site is built by Gly-157, Cys-160, and Thr-163.

This sequence belongs to the peptidase T1B family. HslV subfamily. A double ring-shaped homohexamer of HslV is capped on each side by a ring-shaped HslU homohexamer. The assembly of the HslU/HslV complex is dependent on binding of ATP.

The protein localises to the cytoplasm. The catalysed reaction is ATP-dependent cleavage of peptide bonds with broad specificity.. Allosterically activated by HslU binding. Functionally, protease subunit of a proteasome-like degradation complex believed to be a general protein degrading machinery. This is ATP-dependent protease subunit HslV from Shewanella pealeana (strain ATCC 700345 / ANG-SQ1).